A 208-amino-acid polypeptide reads, in one-letter code: Uracil phosphoribosyltransferase (208 aa).

5-phospho-alpha-D-ribose 1-diphosphate is bound by residues arginine 78, arginine 103, and 130-138; that span reads DPMLATGGS. Residues isoleucine 193 and 198–200 contribute to the uracil site; that span reads GDA. Residue aspartate 199 participates in 5-phospho-alpha-D-ribose 1-diphosphate binding.

This sequence belongs to the UPRTase family. Mg(2+) serves as cofactor.

The catalysed reaction is UMP + diphosphate = 5-phospho-alpha-D-ribose 1-diphosphate + uracil. The protein operates within pyrimidine metabolism; UMP biosynthesis via salvage pathway; UMP from uracil: step 1/1. With respect to regulation, allosterically activated by GTP. Catalyzes the conversion of uracil and 5-phospho-alpha-D-ribose 1-diphosphate (PRPP) to UMP and diphosphate. The chain is Uracil phosphoribosyltransferase from Mannheimia succiniciproducens (strain KCTC 0769BP / MBEL55E).